We begin with the raw amino-acid sequence, 198 residues long: Segregation and condensation protein B (198 aa).

Positions 167–198 (PKLADPEAEDPDQSEMDLFFDRFNQSKEQEEE) are disordered. Over residues 172 to 181 (PEAEDPDQSE) the composition is skewed to acidic residues.

This sequence belongs to the ScpB family. Homodimer. Homodimerization may be required to stabilize the binding of ScpA to the Smc head domains. Component of a cohesin-like complex composed of ScpA, ScpB and the Smc homodimer, in which ScpA and ScpB bind to the head domain of Smc. The presence of the three proteins is required for the association of the complex with DNA.

Its subcellular location is the cytoplasm. Functionally, participates in chromosomal partition during cell division. May act via the formation of a condensin-like complex containing Smc and ScpA that pull DNA away from mid-cell into both cell halves. This chain is Segregation and condensation protein B, found in Listeria innocua serovar 6a (strain ATCC BAA-680 / CLIP 11262).